Consider the following 191-residue polypeptide: Orotate phosphoribosyltransferase (191 aa).

114 to 122 provides a ligand contact to 5-phospho-alpha-D-ribose 1-diphosphate; the sequence is EDVITTGGS. Residues T118 and R146 each contribute to the orotate site.

The protein belongs to the purine/pyrimidine phosphoribosyltransferase family. PyrE subfamily. In terms of assembly, homodimer. It depends on Mg(2+) as a cofactor.

The enzyme catalyses orotidine 5'-phosphate + diphosphate = orotate + 5-phospho-alpha-D-ribose 1-diphosphate. Its pathway is pyrimidine metabolism; UMP biosynthesis via de novo pathway; UMP from orotate: step 1/2. Functionally, catalyzes the transfer of a ribosyl phosphate group from 5-phosphoribose 1-diphosphate to orotate, leading to the formation of orotidine monophosphate (OMP). The protein is Orotate phosphoribosyltransferase of Desulforamulus reducens (strain ATCC BAA-1160 / DSM 100696 / MI-1) (Desulfotomaculum reducens).